The following is a 115-amino-acid chain: uncharacterized protein (115 aa).

A disordered region spans residues 1 to 86; that stretch reads RRPARSGGDG…LSSQLVRPSR (86 aa).

This is an uncharacterized protein from Homo sapiens (Human).